A 318-amino-acid polypeptide reads, in one-letter code: L-malyl-CoA/beta-methylmalyl-CoA lyase (318 aa).

Substrate-binding residues include Phe-19, Arg-24, Lys-30, and Arg-76. The Mg(2+) site is built by Glu-141 and Asp-168. Residues 167 to 168 and 251 to 252 contribute to the substrate site; these read AD and IH.

Belongs to the HpcH/HpaI aldolase family. As to quaternary structure, homohexamer. Dimer of trimers. It depends on Mg(2+) as a cofactor. Mn(2+) serves as cofactor.

It carries out the reaction (S)-malyl-CoA = glyoxylate + acetyl-CoA. It catalyses the reaction (2R,3S)-beta-methylmalyl-CoA = propanoyl-CoA + glyoxylate. In vitro inhibited by EDTA. Functionally, involved in the ethylmalonyl-CoA pathway for acetate assimilation. Catalyzes the reversible condensation of glyoxylate and acetyl-CoA to L-malyl-CoA and the reversible condensation of glyoxylate and propionyl-CoA to beta-methylmalyl-CoA. This chain is L-malyl-CoA/beta-methylmalyl-CoA lyase, found in Rhodobacter capsulatus (Rhodopseudomonas capsulata).